The primary structure comprises 347 residues: MTTQPTTANDIKGLIAMVATGRPLSEADATRAFEAIMSGNATPAQIGGFLMALRVRGETVAEITAAARTMRDKAARIQAPAGAIDIVGTGGDCAGTYNISTAAALVTAACGVPVAKHGNRAASSKSGSADVLAALGVNLDADLALVERSIAEVGIGFMFAQRHHSAMKHVAPARSELGTRTIFNLLGPLANPAGARFELMGVFAQEWVEPLAEVLGRLGAERAWVVHGSDGLDEITTTGPTHVAEFRGGVVRSFDITPADAGLPLAKAEDLQGADPEANAQALRALLEGVKTPYRDIVVFNAAAALVVAGAAEDLATGAARAAQAIDSGAAKDTLARMIAIIGAPAS.

5-phospho-alpha-D-ribose 1-diphosphate contacts are provided by residues Gly88, 91–92 (GD), Thr96, 98–101 (NIST), 116–124 (KHGNRAASS), and Ser128. Gly88 serves as a coordination point for anthranilate. Ser100 lines the Mg(2+) pocket. Asn119 serves as a coordination point for anthranilate. An anthranilate-binding site is contributed by Arg174. Mg(2+) is bound by residues Asp233 and Glu234.

This sequence belongs to the anthranilate phosphoribosyltransferase family. In terms of assembly, homodimer. Mg(2+) is required as a cofactor.

It carries out the reaction N-(5-phospho-beta-D-ribosyl)anthranilate + diphosphate = 5-phospho-alpha-D-ribose 1-diphosphate + anthranilate. It participates in amino-acid biosynthesis; L-tryptophan biosynthesis; L-tryptophan from chorismate: step 2/5. In terms of biological role, catalyzes the transfer of the phosphoribosyl group of 5-phosphorylribose-1-pyrophosphate (PRPP) to anthranilate to yield N-(5'-phosphoribosyl)-anthranilate (PRA). The chain is Anthranilate phosphoribosyltransferase from Rhodospirillum rubrum (strain ATCC 11170 / ATH 1.1.1 / DSM 467 / LMG 4362 / NCIMB 8255 / S1).